A 325-amino-acid polypeptide reads, in one-letter code: Probable conjugal transfer protein TrbB (325 aa).

151 to 158 is a binding site for ATP; that stretch reads GGTASGKT.

It belongs to the GSP E family.

The protein localises to the cytoplasm. This Sinorhizobium fredii (strain NBRC 101917 / NGR234) protein is Probable conjugal transfer protein TrbB (trbB).